A 384-amino-acid chain; its full sequence is Glutamate 5-kinase (384 aa).

Lys-24 serves as a coordination point for ATP. Ser-64, Asp-149, and Asn-161 together coordinate substrate. Residues 181 to 182 (TD) and 223 to 229 (TGGMRTK) each bind ATP. A PUA domain is found at 288–370 (PGAILIDAGA…RDIQTLLGYT (83 aa)).

Belongs to the glutamate 5-kinase family.

It localises to the cytoplasm. The catalysed reaction is L-glutamate + ATP = L-glutamyl 5-phosphate + ADP. The protein operates within amino-acid biosynthesis; L-proline biosynthesis; L-glutamate 5-semialdehyde from L-glutamate: step 1/2. Catalyzes the transfer of a phosphate group to glutamate to form L-glutamate 5-phosphate. This Xylella fastidiosa (strain M23) protein is Glutamate 5-kinase.